A 676-amino-acid polypeptide reads, in one-letter code: DNA ligase (676 aa).

Residues 35-39 (DYEFD), 84-85 (SL), and E118 each bind NAD(+). K120 (N6-AMP-lysine intermediate) is an active-site residue. 4 residues coordinate NAD(+): R141, E184, K299, and K323. Residues C417, C420, C435, and C441 each coordinate Zn(2+). One can recognise a BRCT domain in the interval 600-676 (LINRNFEGVN…ISEDEFNAML (77 aa)).

It belongs to the NAD-dependent DNA ligase family. LigA subfamily. Requires Mg(2+) as cofactor. It depends on Mn(2+) as a cofactor.

The catalysed reaction is NAD(+) + (deoxyribonucleotide)n-3'-hydroxyl + 5'-phospho-(deoxyribonucleotide)m = (deoxyribonucleotide)n+m + AMP + beta-nicotinamide D-nucleotide.. DNA ligase that catalyzes the formation of phosphodiester linkages between 5'-phosphoryl and 3'-hydroxyl groups in double-stranded DNA using NAD as a coenzyme and as the energy source for the reaction. It is essential for DNA replication and repair of damaged DNA. This Chlorobium phaeobacteroides (strain DSM 266 / SMG 266 / 2430) protein is DNA ligase.